The following is a 479-amino-acid chain: uncharacterized protein (479 aa).

10 consecutive transmembrane segments (helical) span residues 11–31 (ILMAIPLITFLLPAPDGLSLI), 43–63 (IVGLVLKPYGEPVILLAAIAV), 90–110 (GTTWLIFTAFTLSSAFVITGL), 151–171 (SGGIIFPIINSVVVALGSDPE), 195–215 (IFLTAMAPNALALSLMAPILG), 223–243 (WFLAASVPGLLCLFLIPLICY), 274–294 (KALSVLFVIALFGWIFSNSLH), 295–315 (INATIVAIIVMVLCIVLSIVT), 328–348 (TLVWYGGIIGMSGLLEKSGFF), and 447–467 (WWITGAIIAFGSLIIHLTIGM).

Belongs to the SLC13A/DASS transporter (TC 2.A.47) family. DIT1 subfamily.

The protein localises to the cell inner membrane. This is an uncharacterized protein from Haemophilus influenzae (strain ATCC 51907 / DSM 11121 / KW20 / Rd).